Reading from the N-terminus, the 110-residue chain is U9-agatoxin-Ao1a (110 aa).

The first 17 residues, 1–17, serve as a signal peptide directing secretion; the sequence is MKLLLAIAGLFLVQTLA. Positions 18–38 are excised as a propeptide; sequence EDVRAHEESSFLAAVAPEEQR. Intrachain disulfides connect C40–C54, C47–C60, C51–C87, C53–C72, and C62–C70.

This sequence belongs to the neurotoxin 37 family. As to expression, expressed by the venom gland.

The protein localises to the secreted. This Agelena orientalis (Funnel-web spider) protein is U9-agatoxin-Ao1a.